Consider the following 756-residue polypeptide: Centromere protein I (756 aa).

The interval 1 to 60 (MSPQKRVKNVQAQNRTSQGSSSFQTTLSAWKVKQDPSNSKNISKHGQNNPVGDYEHADDQ) is disordered. Composition is skewed to polar residues over residues 10-28 (VQAQ…TTLS) and 35-50 (DPSN…QNNP).

It belongs to the CENP-I/CTF3 family. In terms of assembly, component of the CENPA-CAD complex, composed of CENPI, CENPK, CENPL, CENPO, CENPP, CENPQ, CENPR and CENPS. The CENPA-CAD complex interacts with the CENPA-NAC complex, at least composed of CENPA, CENPC, CENPH, CENPM, CENPN, CENPT and CENPU. Interacts with SENP6. Sumoylated. Sumoylated form can be polyubiquitinated by RNF4, leading to its degradation. Desumoylation by SENP6 prevents its degradation.

It localises to the nucleus. Its subcellular location is the chromosome. It is found in the centromere. Functionally, component of the CENPA-CAD (nucleosome distal) complex, a complex recruited to centromeres which is involved in assembly of kinetochore proteins, mitotic progression and chromosome segregation. May be involved in incorporation of newly synthesized CENPA into centromeres via its interaction with the CENPA-NAC complex. Required for the localization of CENPF, MAD1L1 and MAD2 (MAD2L1 or MAD2L2) to kinetochores. Involved in the response of gonadal tissues to follicle-stimulating hormone. The chain is Centromere protein I (CENPI) from Homo sapiens (Human).